A 338-amino-acid polypeptide reads, in one-letter code: 1-aminocyclopropane-1-carboxylate deaminase (338 aa).

N6-(pyridoxal phosphate)lysine is present on K51. Catalysis depends on S78, which acts as the Nucleophile.

This sequence belongs to the ACC deaminase/D-cysteine desulfhydrase family. Homotrimer. Pyridoxal 5'-phosphate serves as cofactor.

It catalyses the reaction 1-aminocyclopropane-1-carboxylate + H2O = 2-oxobutanoate + NH4(+). Catalyzes a cyclopropane ring-opening reaction, the irreversible conversion of 1-aminocyclopropane-1-carboxylate (ACC) to ammonia and alpha-ketobutyrate. Allows growth on ACC as a nitrogen source. The sequence is that of 1-aminocyclopropane-1-carboxylate deaminase from Paraburkholderia phytofirmans (strain DSM 17436 / LMG 22146 / PsJN) (Burkholderia phytofirmans).